We begin with the raw amino-acid sequence, 330 residues long: DNA primase small subunit PriS (330 aa).

Catalysis depends on residues D101 and D103. C116, C119, C128, and D131 together coordinate Zn(2+). The active site involves D235.

This sequence belongs to the eukaryotic-type primase small subunit family. As to quaternary structure, heterodimer of a small subunit (PriS) and a large subunit (PriL). Requires Mg(2+) as cofactor. It depends on Mn(2+) as a cofactor.

Its function is as follows. Catalytic subunit of DNA primase, an RNA polymerase that catalyzes the synthesis of short RNA molecules used as primers for DNA polymerase during DNA replication. The small subunit contains the primase catalytic core and has DNA synthesis activity on its own. Binding to the large subunit stabilizes and modulates the activity, increasing the rate of DNA synthesis while decreasing the length of the DNA fragments, and conferring RNA synthesis capability. The DNA polymerase activity may enable DNA primase to also catalyze primer extension after primer synthesis. May also play a role in DNA repair. Possesses a template-independent 3'-terminal nucleotidyl transferase activity. The sequence is that of DNA primase small subunit PriS from Saccharolobus solfataricus (strain ATCC 35092 / DSM 1617 / JCM 11322 / P2) (Sulfolobus solfataricus).